The primary structure comprises 166 residues: Co-chaperone protein HscB homolog (166 aa).

One can recognise a J domain in the interval 3-75 (QYFTLFRIEP…IDRAAYLLKT (73 aa)).

This sequence belongs to the HscB family. Interacts with HscA and stimulates its ATPase activity.

Its function is as follows. Co-chaperone involved in the maturation of iron-sulfur cluster-containing proteins. Seems to help targeting proteins to be folded toward HscA. This Neisseria gonorrhoeae (strain NCCP11945) protein is Co-chaperone protein HscB homolog.